Reading from the N-terminus, the 188-residue chain is Ion-translocating oxidoreductase complex subunit B (188 aa).

The segment at 1–26 (MNGVFLAIGALLPICLAGGALLGYAA) is hydrophobic. A 4Fe-4S domain is found at 32–90 (QGDPVAEQVNALLPQTQCGQCGYPGCKPYAEAIAAGDKINKCPPGGEATIRALADLLDL). C49, C52, C57, C73, C113, C116, C119, C123, C143, C146, C149, and C153 together coordinate [4Fe-4S] cluster. 4Fe-4S ferredoxin-type domains are found at residues 104 to 133 (RVAY…GAAR) and 134 to 163 (LMHT…MREI).

The protein belongs to the 4Fe4S bacterial-type ferredoxin family. RnfB subfamily. In terms of assembly, the complex is composed of six subunits: RnfA, RnfB, RnfC, RnfD, RnfE and RnfG. Requires [4Fe-4S] cluster as cofactor.

It localises to the cell inner membrane. Its function is as follows. Part of a membrane-bound complex that couples electron transfer with translocation of ions across the membrane. The protein is Ion-translocating oxidoreductase complex subunit B of Pseudomonas aeruginosa (strain LESB58).